The primary structure comprises 310 residues: MASELQRPDSMPCHNRQVNSTSSPSPEHLLAEDRVLDHAEENNAAMAKLTLLPGHAHSSVLSERDSPACCSTNLHSENHSDSSDSGNYDAPVGGDSLLGDCELSRQIGAQLKLLPMNDQIRELQTIIRDKTASRGDFMFSADRLIRLVVEEGLNQLPYKECMVTTPTGHKYEGVKFEKGNCGVSIMRSGEAMEQGLRDCCRSIRIGKILIQSDEETQRAKVYYAKFPPDIHRRKVLLMYPILSTGNTVIEAVKVLIEHGVQPSVIILLSLFSTPHGAKSIIQEFPEITILTTEVHPVAPTHFGQKYFGTD.

Disordered regions lie at residues 1 to 27 (MASELQRPDSMPCHNRQVNSTSSPSPE) and 62 to 89 (SERDSPACCSTNLHSENHSDSSDSGNYD). Residues 16–25 (RQVNSTSSPS) show a composition bias toward polar residues. Serine 25 carries the post-translational modification Phosphoserine. GTP is bound by residues arginine 134, arginine 143, and 177–180 (EKGN). Arginine 187 lines the 5-phospho-alpha-D-ribose 1-diphosphate pocket. The GTP site is built by arginine 204 and arginine 233. 239 to 247 (YPILSTGNT) lines the 5-phospho-alpha-D-ribose 1-diphosphate pocket. 300-302 (THF) contributes to the uracil binding site.

Belongs to the UPRTase family.

The protein resides in the cytoplasm. The protein localises to the nucleus. The protein is Uracil phosphoribosyltransferase homolog (Uprt) of Mus musculus (Mouse).